A 174-amino-acid chain; its full sequence is Transcription antitermination protein NusB (174 aa).

This sequence belongs to the NusB family.

In terms of biological role, involved in transcription antitermination. Required for transcription of ribosomal RNA (rRNA) genes. Binds specifically to the boxA antiterminator sequence of the ribosomal RNA (rrn) operons. In Rhodopseudomonas palustris (strain TIE-1), this protein is Transcription antitermination protein NusB.